Consider the following 82-residue polypeptide: Small ribosomal subunit protein uS17 (82 aa).

This sequence belongs to the universal ribosomal protein uS17 family. As to quaternary structure, part of the 30S ribosomal subunit.

Its function is as follows. One of the primary rRNA binding proteins, it binds specifically to the 5'-end of 16S ribosomal RNA. This is Small ribosomal subunit protein uS17 from Shewanella sp. (strain MR-7).